The chain runs to 536 residues: MPQSPRSAPGLLLLQALVSLVSLALVAPARLQPALWPFPRSVQMFPRLLYISAEDFSIDHSPNSTAGPSCSLLQEAFRRYYNYVFGFYKRHHGPARFRAEPQLQKLLVSITLESECESFPSLSSDETYSLLVQEPVAVLKANSVWGALRGLETFSQLVYQDSFGTFTINESSIADSPRFPHRGILIDTSRHFLPVKTILKTLDAMAFNKFNVLHWHIVDDQSFPYQSTTFPELSNKGSYSLSHVYTPNDVRMVLEYARLRGIRVIPEFDTPGHTQSWGKGQKNLLTPCYNQKTKTQVFGPVDPTVNTTYAFFNTFFKEISSVFPDQFIHLGGDEVEFQCWASNPNIQGFMKRKGFGSDFRRLESFYIKKILEIISSLKKNSIVWQEVFDDKVELQPGTVVEVWKSEHYSYELKQVTGSGFPAILSAPWYLDLISYGQDWKNYYKVEPLNFEGSEKQKQLVIGGEACLWGEFVDATNLTPRLWPRASAVGERLWSPKTVTDLENAYKRLAVHRCRMVSRGIAAQPLYTGYCNYENKI.

The signal sequence occupies residues 1–31 (MPQSPRSAPGLLLLQALVSLVSLALVAPARL). Asn63 carries N-linked (GlcNAc...) asparagine glycosylation. Cys70 and Cys116 are joined by a disulfide. N-linked (GlcNAc...) asparagine glycosylation is found at Asn169 and Asn306. Disulfide bonds link Cys288–Cys339 and Cys513–Cys530. Glu334 functions as the Proton donor in the catalytic mechanism.

It belongs to the glycosyl hydrolase 20 family. In terms of assembly, there are 3 forms of beta-hexosaminidase: hexosaminidase A is a heterodimer composed of one subunit alpha and one subunit beta (chain A and B); hexosaminidase B is a homodimer of two beta subunits (two chains A and B); hexosaminidase S is a homodimer of two alpha subunits. The composition of the dimer (isozyme A versus isozyme S) has a significant effect on the substrate specificity of the alpha subunit active site.

Its subcellular location is the lysosome. It localises to the cytoplasmic vesicle. It is found in the secretory vesicle. The protein localises to the cortical granule. It catalyses the reaction Hydrolysis of terminal non-reducing N-acetyl-D-hexosamine residues in N-acetyl-beta-D-hexosaminides.. It carries out the reaction N-acetyl-beta-D-galactosaminyl-(1-&gt;4)-beta-D-3-sulfogalactosyl-(1-&gt;4)-beta-D-glucosyl-(1&lt;-&gt;1')-ceramide + H2O = a beta-D-3-sulfogalactosyl-(1-&gt;4)-beta-D-glucosyl-(1&lt;-&gt;1')-ceramide + N-acetyl-beta-D-galactosamine. The catalysed reaction is a ganglioside GM2 (d18:1(4E)) + H2O = a ganglioside GM3 (d18:1(4E)) + N-acetyl-beta-D-galactosamine. The enzyme catalyses a ganglioside GM2 + H2O = a ganglioside GM3 + N-acetyl-beta-D-galactosamine. It catalyses the reaction beta-D-GalNAc-(1-&gt;4)-alpha-L-IdoA-(1-&gt;3)-beta-D-GalNAc-4-sulfate-(1-&gt;4)-alpha-L-IdoA-(1-&gt;3)-D-GalNAc-4-sulfate + H2O = alpha-L-IdoA-(1-&gt;3)-beta-D-GalNAc-4-sulfate-(1-&gt;4)-alpha-L-IdoA-(1-&gt;3)-D-GalNAc-4-sulfate + N-acetyl-D-galactosamine. It carries out the reaction N-acetyl-beta-D-6-sulfogalactosaminyl-(1-&gt;4)-alpha-L-iduronyl-(1-&gt;3)-N-acetyl-D-6-sulfogalactosamine + H2O = alpha-L-iduronyl-(1-&gt;3)-N-acetyl-D-6-sulfogalactosamine + N-acetyl-D-6-sulfogalactosamine. Its activity is regulated as follows. Addition of GM2A stimulates the hydrolysis of sulfated glycosphingolipid SM2 and the ganglioside GM2. Hydrolyzes the non-reducing end N-acetyl-D-hexosamine and/or sulfated N-acetyl-D-hexosamine of glycoconjugates, such as the oligosaccharide moieties from proteins and neutral glycolipids, or from certain mucopolysaccharides. The isozyme B does not hydrolyze each of these substrates, however hydrolyzes efficiently neutral oligosaccharide. Only the isozyme A is responsible for the degradation of GM2 gangliosides in the presence of GM2A. During fertilization is responsible, at least in part, for the zona block to polyspermy. Present in the cortical granules of non-activated oocytes, is exocytosed during the cortical reaction in response to oocyte activation and inactivates the sperm galactosyltransferase-binding site, accounting for the block in sperm binding to the zona pellucida. This is Beta-hexosaminidase subunit beta from Mus musculus (Mouse).